The primary structure comprises 226 residues: Small ribosomal subunit protein uS3 (226 aa).

Positions 39–107 (IRKFIKNKLY…NILINITEIK (69 aa)) constitute a KH type-2 domain.

This sequence belongs to the universal ribosomal protein uS3 family. As to quaternary structure, part of the 30S ribosomal subunit. Forms a tight complex with proteins S10 and S14.

In terms of biological role, binds the lower part of the 30S subunit head. Binds mRNA in the 70S ribosome, positioning it for translation. This is Small ribosomal subunit protein uS3 from Acetivibrio thermocellus (strain ATCC 27405 / DSM 1237 / JCM 9322 / NBRC 103400 / NCIMB 10682 / NRRL B-4536 / VPI 7372) (Clostridium thermocellum).